A 597-amino-acid chain; its full sequence is Putative heat shock protein HSP 90-beta-3 (597 aa).

The ATP site is built by N46, D88, and K107. The interval 201 to 241 (DKEISDDEAEEEKGEKEEEDKDDEEKPKIKDVGSDEEDDSK) is disordered. Over residues 204 to 223 (ISDDEAEEEKGEKEEEDKDD) the composition is skewed to acidic residues. Over residues 224-233 (EEKPKIKDVG) the composition is skewed to basic and acidic residues. R334 provides a ligand contact to ATP. Residues 414 to 446 (LELPEDEEEKKKMEESKEKFENLCKLMKEILDK) adopt a coiled-coil conformation. Positions 564 to 578 (DEDEVAAEEPSDAVP) are enriched in acidic residues. Residues 564-597 (DEDEVAAEEPSDAVPDEIPPLEGDEDASRMEEVD) are disordered. Residues 593-597 (MEEVD) carry the TPR repeat-binding motif.

It belongs to the heat shock protein 90 family. Homodimer.

It is found in the cytoplasm. Putative molecular chaperone that may promote the maturation, structural maintenance and proper regulation of specific target proteins. The polypeptide is Putative heat shock protein HSP 90-beta-3 (HSP90AB3P) (Homo sapiens (Human)).